A 367-amino-acid polypeptide reads, in one-letter code: sn-glycerol-3-phosphate import ATP-binding protein UgpC (367 aa).

Positions 4 to 235 (LSLRNVQKTY…PASTFVAGFI (232 aa)) constitute an ABC transporter domain. 37 to 44 (GPSGCGKS) contributes to the ATP binding site.

It belongs to the ABC transporter superfamily. sn-glycerol-3-phosphate importer (TC 3.A.1.1.3) family. As to quaternary structure, the complex is composed of two ATP-binding proteins (UgpC), two transmembrane proteins (UgpA and UgpE) and a solute-binding protein (UgpB).

Its subcellular location is the cell inner membrane. It catalyses the reaction sn-glycerol 3-phosphate(out) + ATP + H2O = sn-glycerol 3-phosphate(in) + ADP + phosphate + H(+). Its function is as follows. Part of the ABC transporter complex UgpBAEC involved in sn-glycerol-3-phosphate (G3P) import. Responsible for energy coupling to the transport system. The sequence is that of sn-glycerol-3-phosphate import ATP-binding protein UgpC from Cupriavidus metallidurans (strain ATCC 43123 / DSM 2839 / NBRC 102507 / CH34) (Ralstonia metallidurans).